The sequence spans 372 residues: 4-hydroxy-3-methylbut-2-en-1-yl diphosphate synthase (flavodoxin) (372 aa).

C270, C273, C305, and E312 together coordinate [4Fe-4S] cluster.

It belongs to the IspG family. [4Fe-4S] cluster serves as cofactor.

The catalysed reaction is (2E)-4-hydroxy-3-methylbut-2-enyl diphosphate + oxidized [flavodoxin] + H2O + 2 H(+) = 2-C-methyl-D-erythritol 2,4-cyclic diphosphate + reduced [flavodoxin]. The protein operates within isoprenoid biosynthesis; isopentenyl diphosphate biosynthesis via DXP pathway; isopentenyl diphosphate from 1-deoxy-D-xylulose 5-phosphate: step 5/6. In terms of biological role, converts 2C-methyl-D-erythritol 2,4-cyclodiphosphate (ME-2,4cPP) into 1-hydroxy-2-methyl-2-(E)-butenyl 4-diphosphate. The polypeptide is 4-hydroxy-3-methylbut-2-en-1-yl diphosphate synthase (flavodoxin) (Aliivibrio fischeri (strain ATCC 700601 / ES114) (Vibrio fischeri)).